The sequence spans 54 residues: Ovomucoid (54 aa).

The Kazal-like domain maps to 4–54; it reads VDCSDYPKPACTVEYMPLCGSDNKTYGNKCNFCNAVVDSNGTLTLSHFGKC. 3 disulfides stabilise this stretch: C6–C36, C14–C33, and C22–C54. The N-linked (GlcNAc...) asparagine glycan is linked to N43.

The protein localises to the secreted. This is Ovomucoid from Anser canagicus (Emperor goose).